A 246-amino-acid chain; its full sequence is 3-deoxy-manno-octulosonate cytidylyltransferase (246 aa).

Belongs to the KdsB family.

It is found in the cytoplasm. The catalysed reaction is 3-deoxy-alpha-D-manno-oct-2-ulosonate + CTP = CMP-3-deoxy-beta-D-manno-octulosonate + diphosphate. It participates in nucleotide-sugar biosynthesis; CMP-3-deoxy-D-manno-octulosonate biosynthesis; CMP-3-deoxy-D-manno-octulosonate from 3-deoxy-D-manno-octulosonate and CTP: step 1/1. Its pathway is bacterial outer membrane biogenesis; lipopolysaccharide biosynthesis. Activates KDO (a required 8-carbon sugar) for incorporation into bacterial lipopolysaccharide in Gram-negative bacteria. In Rickettsia conorii (strain ATCC VR-613 / Malish 7), this protein is 3-deoxy-manno-octulosonate cytidylyltransferase.